Here is a 407-residue protein sequence, read N- to C-terminus: Peptidase T (407 aa).

Histidine 82 is a binding site for Zn(2+). Aspartate 84 is an active-site residue. Aspartate 143 contacts Zn(2+). The active-site Proton acceptor is the glutamate 177. Zn(2+) contacts are provided by glutamate 178, aspartate 200, and histidine 382.

This sequence belongs to the peptidase M20B family. It depends on Zn(2+) as a cofactor.

Its subcellular location is the cytoplasm. The catalysed reaction is Release of the N-terminal residue from a tripeptide.. Cleaves the N-terminal amino acid of tripeptides. The sequence is that of Peptidase T from Streptococcus pyogenes serotype M12 (strain MGAS2096).